Consider the following 807-residue polypeptide: Enhancer of polycomb homolog 2 (807 aa).

Glycyl lysine isopeptide (Lys-Gly) (interchain with G-Cter in SUMO2) cross-links involve residues K135, K195, K324, and K362. A disordered region spans residues 376 to 396 (DEFPQVLSPVSEPEEENDPDG). A Phosphoserine modification is found at S538. Low complexity predominate over residues 600-613 (QLQQKQQSQHSSQQ). Disordered stretches follow at residues 600–628 (QLQQKQQSQHSSQQTHPKAQGSSTSDCMS) and 645–673 (SAPVPSRSEVAKEQNTGHNNINGVVQPSG). Polar residues-rich tracts occupy residues 614 to 628 (THPKAQGSSTSDCMS) and 657 to 673 (EQNTGHNNINGVVQPSG). S754 carries the phosphoserine modification.

It belongs to the enhancer of polycomb family.

Its subcellular location is the nucleus. Functionally, may play a role in transcription or DNA repair. In Homo sapiens (Human), this protein is Enhancer of polycomb homolog 2 (EPC2).